The sequence spans 504 residues: AMP phosphorylase (504 aa).

AMP contacts are provided by residues G169, 195-200, and T204; that span reads SRAITS. D257 serves as the catalytic Proton donor. The AMP site is built by S265 and K289.

Belongs to the thymidine/pyrimidine-nucleoside phosphorylase family. Type 2 subfamily.

It carries out the reaction AMP + phosphate = alpha-D-ribose 1,5-bisphosphate + adenine. The catalysed reaction is CMP + phosphate = cytosine + alpha-D-ribose 1,5-bisphosphate. It catalyses the reaction UMP + phosphate = alpha-D-ribose 1,5-bisphosphate + uracil. Its function is as follows. Catalyzes the conversion of AMP and phosphate to adenine and ribose 1,5-bisphosphate (R15P). Exhibits phosphorylase activity toward CMP and UMP in addition to AMP. Functions in an archaeal AMP degradation pathway, together with R15P isomerase and RubisCO. This chain is AMP phosphorylase, found in Methanococcus aeolicus (strain ATCC BAA-1280 / DSM 17508 / OCM 812 / Nankai-3).